Consider the following 777-residue polypeptide: E3 UFM1-protein ligase 1 homolog (777 aa).

The span at 396-417 (MKHQDPMDRDSAVGEGKADKRE) shows a compositional bias: basic and acidic residues. The interval 396 to 470 (MKHQDPMDRD…PSGGKKGGKD (75 aa)) is disordered.

It belongs to the UFL1 family.

In terms of biological role, E3 UFM1-protein ligase that mediates ufmylation of target proteins. The protein is E3 UFM1-protein ligase 1 homolog of Aedes aegypti (Yellowfever mosquito).